The sequence spans 130 residues: Small ribosomal subunit protein uS9 (130 aa).

This sequence belongs to the universal ribosomal protein uS9 family.

This chain is Small ribosomal subunit protein uS9, found in Burkholderia vietnamiensis (strain G4 / LMG 22486) (Burkholderia cepacia (strain R1808)).